We begin with the raw amino-acid sequence, 382 residues long: Proton extrusion protein PxcA (382 aa).

A run of 4 helical transmembrane segments spans residues 162-182 (VLLLLVLVPLLVSQISGTYLI), 257-277 (AIKNVFADLAGLIAFAVVCLM), 305-325 (IILFTDIFVGYHSPEGWSVLL), and 340-360 (FVNLFIATFPVVLATIFKYWI).

This sequence belongs to the CemA family.

It is found in the cell inner membrane. Functionally, required for H(+) efflux immediately after light irradiation to form a rapid H(+) concentration gradient across the thylakoid membranes. Together with PxcL, contributes to transient H(+) uptake following dark to light transition. In Synechococcus sp. (strain CC9605), this protein is Proton extrusion protein PxcA.